A 622-amino-acid polypeptide reads, in one-letter code: Threonine--tRNA ligase (622 aa).

Positions 1–136 (MKTLLIHSDY…PLSELSRKIT (136 aa)) are editing domain. The segment at 199 to 498 (PHVKYIKEKE…TLENKPPALP (300 aa)) is catalytic. Residues Cys-291, His-343, and His-467 each coordinate Zn(2+).

It belongs to the class-II aminoacyl-tRNA synthetase family. In terms of assembly, homodimer. It depends on Zn(2+) as a cofactor.

It localises to the cytoplasm. It carries out the reaction tRNA(Thr) + L-threonine + ATP = L-threonyl-tRNA(Thr) + AMP + diphosphate + H(+). Catalyzes the attachment of threonine to tRNA(Thr) in a two-step reaction: L-threonine is first activated by ATP to form Thr-AMP and then transferred to the acceptor end of tRNA(Thr). Also edits incorrectly charged L-seryl-tRNA(Thr). The sequence is that of Threonine--tRNA ligase from Methanococcus maripaludis (strain DSM 14266 / JCM 13030 / NBRC 101832 / S2 / LL).